The chain runs to 286 residues: TGESYAGHYIPALASRIHQGNQANEGIHINLKGLAIGNGLTNPAIQYKGYPDYALDMGIITQTTHDLLGKVLVPACELAIKLCGTNGKVSCLTANVACNLIFSDIMLHAGGVNYYDIRKKCEGSLCYDFSNMEKFLNQESVRDSLGVGKIRFVSCSTEVYMAMLVDWMRNLEVGIPLLLEDGINLLIYAGEYDLICNWLGNSRWVHAMKWSGQKEFVASSDVPFVVNGSQAGLLKSYGPLSFLKVHDAGHMVPMDQPKAALEMVKQWTRGTLAESIDGEEKLVADM.

The active site involves serine 4. 2 cysteine pairs are disulfide-bonded: cysteine 83–cysteine 98 and cysteine 121–cysteine 126. Aspartate 193 is a catalytic residue. Position 196 (cysteine 196) interacts with substrate. N-linked (GlcNAc...) asparagine glycosylation is present at asparagine 227. Histidine 250 is an active-site residue.

It belongs to the peptidase S10 family.

In terms of biological role, involved in degradation of small peptides. The chain is Serine carboxypeptidase-like from Pisum sativum (Garden pea).